The primary structure comprises 168 residues: Photosystem I assembly protein Ycf3 (168 aa).

TPR repeat units lie at residues 35 to 68 (AFTYYRDGMSAQSEGNYAEALQNYYEAMRLEMDP), 72 to 105 (SYILYNIGLIHTSNGEHTKALEYYFRALERNPFL), and 120 to 153 (GEQAIRQGDSEIAEAWFDQAAEYWKQAIALTPGN).

The protein belongs to the Ycf3 family.

It localises to the plastid. Its subcellular location is the chloroplast thylakoid membrane. Functionally, essential for the assembly of the photosystem I (PSI) complex. May act as a chaperone-like factor to guide the assembly of the PSI subunits. The sequence is that of Photosystem I assembly protein Ycf3 from Pelargonium hortorum (Common geranium).